Consider the following 1133-residue polypeptide: DNA repair protein rad8 (1133 aa).

Disordered stretches follow at residues 1–34 and 392–413; these read MKRKVQKIIDEAPLEENSPPRFFDSDVEADSKPN and PEARDESNSDLTPSSTEDEEDV. Ser-18 is subject to Phosphoserine. The 190-residue stretch at 516-705 folds into the Helicase ATP-binding domain; the sequence is PNSMPYHRGG…YSLIKFMRYE (190 aa). Position 529-536 (529-536) interacts with ATP; it reads DEMGLGKT. The short motif at 656–659 is the DEGH box element; the sequence is DEGH. The RING-type zinc finger occupies 877–923; that stretch reads CPICCNEPIQNPLLLNCKHACCGDCLSEHIQYQKRRNIIPPLCHTCR. In terms of domain architecture, Helicase C-terminal spans 971–1125; sequence QLRQLTHSSE…EGKQQVQSIE (155 aa).

The protein belongs to the SNF2/RAD54 helicase family.

Its subcellular location is the cytoplasm. The protein localises to the nucleus. Probable helicase, member of the UBC2/RAD6 epistasis group. Functions with DNA repair protein rad18 in error-free postreplication DNA repair. Involved in the maintenance of wild-type rates of instability of simple repetitive sequences such as poly(GT) repeats. Plays a role in surviving topoisomerase-mediated DNA damage. This Schizosaccharomyces pombe (strain 972 / ATCC 24843) (Fission yeast) protein is DNA repair protein rad8.